We begin with the raw amino-acid sequence, 367 residues long: tRNA(Ile)-lysidine synthase, chloroplastic (367 aa).

An ATP-binding site is contributed by 64 to 69; that stretch reads SGGQDS.

It belongs to the tRNA(Ile)-lysidine synthase family.

The protein localises to the plastid. Its subcellular location is the chloroplast. The enzyme catalyses cytidine(34) in tRNA(Ile2) + L-lysine + ATP = lysidine(34) in tRNA(Ile2) + AMP + diphosphate + H(+). Its function is as follows. Ligates lysine onto the cytidine present at position 34 of the AUA codon-specific tRNA(Ile) that contains the anticodon CAU, in an ATP-dependent manner. Cytidine is converted to lysidine, thus changing the amino acid specificity of the tRNA from methionine to isoleucine. The protein is tRNA(Ile)-lysidine synthase, chloroplastic of Nephroselmis olivacea (Green alga).